Reading from the N-terminus, the 400-residue chain is Coenzyme A biosynthesis bifunctional protein CoaBC (400 aa).

A phosphopantothenoylcysteine decarboxylase region spans residues 1–190 (MKLNGKHIVV…SQKQDLQGLN (190 aa)). Cysteine 158 serves as the catalytic Proton donor. The segment at 191 to 400 (VSITAGPTRE…EIIERYQKTL (210 aa)) is phosphopantothenate--cysteine ligase. CTP-binding positions include 273–275 (GCA), aspartate 279, lysine 289, 305–308 (PDII), phenylalanine 324, lysine 338, and lysine 342.

It in the N-terminal section; belongs to the HFCD (homo-oligomeric flavin containing Cys decarboxylase) superfamily. This sequence in the C-terminal section; belongs to the PPC synthetase family. Mg(2+) is required as a cofactor. Requires FMN as cofactor.

It carries out the reaction N-[(R)-4-phosphopantothenoyl]-L-cysteine + H(+) = (R)-4'-phosphopantetheine + CO2. The enzyme catalyses (R)-4'-phosphopantothenate + L-cysteine + CTP = N-[(R)-4-phosphopantothenoyl]-L-cysteine + CMP + diphosphate + H(+). It participates in cofactor biosynthesis; coenzyme A biosynthesis; CoA from (R)-pantothenate: step 2/5. The protein operates within cofactor biosynthesis; coenzyme A biosynthesis; CoA from (R)-pantothenate: step 3/5. In terms of biological role, catalyzes two sequential steps in the biosynthesis of coenzyme A. In the first step cysteine is conjugated to 4'-phosphopantothenate to form 4-phosphopantothenoylcysteine. In the second step the latter compound is decarboxylated to form 4'-phosphopantotheine. This chain is Coenzyme A biosynthesis bifunctional protein CoaBC, found in Haemophilus influenzae (strain ATCC 51907 / DSM 11121 / KW20 / Rd).